A 76-amino-acid chain; its full sequence is UPF0346 protein lhv_1069 (76 aa).

It belongs to the UPF0346 family.

This Lactobacillus helveticus (strain DPC 4571) protein is UPF0346 protein lhv_1069.